Consider the following 522-residue polypeptide: Signal transduction histidine-protein kinase/phosphatase MprB (522 aa).

At 1-30 (MIRLYRPQRPPLRAPLRATPSLSLRWRVML) the chain is on the cytoplasmic side. The chain crosses the membrane as a helical span at residues 31–51 (LAMSMVAMVVVLMAFAVYAVI). The Extracellular segment spans residues 52-167 (SAALYSDIDN…PTEAVMNKLR (116 aa)). Residues 168-188 (WVLLIVGGVGVAVAAVAGGMV) form a helical membrane-spanning segment. The Cytoplasmic portion of the chain corresponds to 189–522 (TRAGLRPVAR…SVDSQSARAR (334 aa)). Positions 190-242 (RAGLRPVARLTEAAERVARTDDLRPIPVFGSDELARLTESFNLMLRALAESRE) constitute an HAMP domain. One can recognise a Histidine kinase domain in the interval 250–470 (DAGHELRTPL…SFYVLLPGRS (221 aa)). Residue histidine 253 is modified to Phosphohistidine; by autocatalysis. The interval 467–522 (PGRSLPPAGHSTPAGESETDQAEAATDPAVPVAGDTANSRESANVISVDSQSARAR) is disordered. Polar residues predominate over residues 502-522 (TANSRESANVISVDSQSARAR).

Requires Mg(2+) as cofactor. Mn(2+) is required as a cofactor. Autophosphorylated.

The protein localises to the cell membrane. The catalysed reaction is ATP + protein L-histidine = ADP + protein N-phospho-L-histidine.. Functionally, member of the two-component regulatory system MprB/MprA which contributes to maintaining a balance among several systems involved in stress resistance and is required for establishment and maintenance of persistent infection in the host. In response to environmental signals MprB acts both as a membrane-associated protein kinase that undergoes autophosphorylation and subsequently transfers the phosphate to MprA, and a protein phosphatase that dephosphorylates phospho-MprA. This chain is Signal transduction histidine-protein kinase/phosphatase MprB (mprB), found in Mycolicibacterium paratuberculosis (strain ATCC BAA-968 / K-10) (Mycobacterium paratuberculosis).